The sequence spans 390 residues: MDTFLFTSESVNEGHPDKLCDQVSDAILDACLKQDPESKVACESCTKTNMVMVFGEITTKAQVNYEKIVRDTCRGIGFTSPDVGLDADHCKVLVNIEQQSPDIAQGVHGHLTKKPEEIGAGDQGHMFGYATDETPELMPLTHVLATKLGAKLTEVRKNSTCPWLRPDGKTQVTVEYRNEGGAMVPIRVHTVLISTQHDETVTNDQIANDLKKHVIKPVVPAQYLDDNTIFHLNPSGRFVIGGPHGDAGLTGRKIIIDTYGGWGAHGGGAFSGKDPTKVDRSGAYIVRQAAKSVVASGLARRCLVQVSYAIGVAEPLSVFVDTYKTGKIADKDILALIKENFDFRPGMIAINLDLKRGGNLRYQKTAAYGHFGRDDPDFTWETVKILKPKA.

Glutamate 9 is a Mg(2+) binding site. ATP is bound at residue histidine 15. Glutamate 43 serves as a coordination point for K(+). L-methionine is bound by residues glutamate 56 and glutamine 99. Residues 167 to 169 (DGK), 235 to 238 (SGRF), aspartate 246, 252 to 253 (RK), alanine 269, lysine 273, and lysine 277 contribute to the ATP site. Position 246 (aspartate 246) interacts with L-methionine. Lysine 277 is an L-methionine binding site.

The protein belongs to the AdoMet synthase family. As to quaternary structure, homotetramer. Requires Mn(2+) as cofactor. The cofactor is Mg(2+). Co(2+) is required as a cofactor. K(+) serves as cofactor.

It is found in the cytoplasm. The enzyme catalyses L-methionine + ATP + H2O = S-adenosyl-L-methionine + phosphate + diphosphate. The protein operates within amino-acid biosynthesis; S-adenosyl-L-methionine biosynthesis; S-adenosyl-L-methionine from L-methionine: step 1/1. In terms of biological role, catalyzes the formation of S-adenosylmethionine from methionine and ATP. The reaction comprises two steps that are both catalyzed by the same enzyme: formation of S-adenosylmethionine (AdoMet) and triphosphate, and subsequent hydrolysis of the triphosphate. The protein is S-adenosylmethionine synthase 1 (SAM1) of Actinidia chinensis var. chinensis (Chinese soft-hair kiwi).